The sequence spans 341 residues: Phosphatidylserine decarboxylase proenzyme (341 aa).

Residues Asp90, His147, and Ser254 each act as charge relay system; for autoendoproteolytic cleavage activity in the active site. Ser254 serves as the catalytic Schiff-base intermediate with substrate; via pyruvic acid; for decarboxylase activity. Ser254 is modified (pyruvic acid (Ser); by autocatalysis). The interval Arg287–Pro341 is disordered.

Belongs to the phosphatidylserine decarboxylase family. PSD-B subfamily. Prokaryotic type I sub-subfamily. Heterodimer of a large membrane-associated beta subunit and a small pyruvoyl-containing alpha subunit. Requires pyruvate as cofactor. In terms of processing, is synthesized initially as an inactive proenzyme. Formation of the active enzyme involves a self-maturation process in which the active site pyruvoyl group is generated from an internal serine residue via an autocatalytic post-translational modification. Two non-identical subunits are generated from the proenzyme in this reaction, and the pyruvate is formed at the N-terminus of the alpha chain, which is derived from the carboxyl end of the proenzyme. The autoendoproteolytic cleavage occurs by a canonical serine protease mechanism, in which the side chain hydroxyl group of the serine supplies its oxygen atom to form the C-terminus of the beta chain, while the remainder of the serine residue undergoes an oxidative deamination to produce ammonia and the pyruvoyl prosthetic group on the alpha chain. During this reaction, the Ser that is part of the protease active site of the proenzyme becomes the pyruvoyl prosthetic group, which constitutes an essential element of the active site of the mature decarboxylase.

It is found in the cell membrane. It catalyses the reaction a 1,2-diacyl-sn-glycero-3-phospho-L-serine + H(+) = a 1,2-diacyl-sn-glycero-3-phosphoethanolamine + CO2. It participates in phospholipid metabolism; phosphatidylethanolamine biosynthesis; phosphatidylethanolamine from CDP-diacylglycerol: step 2/2. Its function is as follows. Catalyzes the formation of phosphatidylethanolamine (PtdEtn) from phosphatidylserine (PtdSer). This is Phosphatidylserine decarboxylase proenzyme from Pectobacterium atrosepticum (strain SCRI 1043 / ATCC BAA-672) (Erwinia carotovora subsp. atroseptica).